We begin with the raw amino-acid sequence, 328 residues long: DNA repair protein RAD51 homolog 4 (328 aa).

The segment at 1–83 (MGVLRVGLCP…ELKTSTAILS (83 aa)) is preferentially binds ssDNA. 107 to 114 (GGPGSGKT) serves as a coordination point for ATP.

It belongs to the RecA family. RAD51 subfamily. Part of the BCDX2 complex consisting of RAD51B, RAD51C, RAD51D and XRCC2; the complex has a ring-like structure arranged into a flat disc around a central channel. In the absence of DNA, the BCDX2 subcomplex XRCC2:RAD51D formed a multimeric ring structure; in the presence of single-stranded DNA it formed a filamentous structure with the ssDNA. Interacts with SWSAP1 and ZSWIM7; involved in homologous recombination repair. Interacts with BLM; required for stimulation of BLM activity by the BCDX2 subcomplex XRCC2:RAD51D. In terms of tissue distribution, expressed in colon, prostate, spleen, testis, ovary, thymus and small intestine. Weakly expressed in leukocytes.

It localises to the nucleus. Its subcellular location is the cytoplasm. The protein resides in the cytoskeleton. The protein localises to the microtubule organizing center. It is found in the centrosome. It localises to the chromosome. Its subcellular location is the telomere. Functionally, involved in the homologous recombination repair (HRR) pathway of double-stranded DNA breaks arising during DNA replication or induced by DNA-damaging agents. Bind to single-stranded DNA (ssDNA) and has DNA-dependent ATPase activity. Part of the RAD51 paralog protein complex BCDX2 which acts in the BRCA1-BRCA2-dependent HR pathway. Upon DNA damage, BCDX2 acts downstream of BRCA2 recruitment and upstream of RAD51 recruitment. BCDX2 binds predominantly to the intersection of the four duplex arms of the Holliday junction and to junction of replication forks. The BCDX2 complex was originally reported to bind single-stranded DNA, single-stranded gaps in duplex DNA and specifically to nicks in duplex DNA. Involved in telomere maintenance. The BCDX2 subcomplex XRCC2:RAD51D can stimulate Holliday junction resolution by BLM. The protein is DNA repair protein RAD51 homolog 4 (RAD51D) of Homo sapiens (Human).